Reading from the N-terminus, the 335-residue chain is Beta-ketoacyl-[acyl-carrier-protein] synthase III (335 aa).

Catalysis depends on residues Cys119 and His261. The tract at residues 262–266 is ACP-binding; the sequence is QANQR. Residue Asn291 is part of the active site.

It belongs to the thiolase-like superfamily. FabH family. Homodimer.

The protein localises to the cytoplasm. It carries out the reaction malonyl-[ACP] + acetyl-CoA + H(+) = 3-oxobutanoyl-[ACP] + CO2 + CoA. The protein operates within lipid metabolism; fatty acid biosynthesis. Functionally, catalyzes the condensation reaction of fatty acid synthesis by the addition to an acyl acceptor of two carbons from malonyl-ACP. Catalyzes the first condensation reaction which initiates fatty acid synthesis and may therefore play a role in governing the total rate of fatty acid production. Possesses both acetoacetyl-ACP synthase and acetyl transacylase activities. Its substrate specificity determines the biosynthesis of branched-chain and/or straight-chain of fatty acids. The polypeptide is Beta-ketoacyl-[acyl-carrier-protein] synthase III (Prochlorococcus marinus (strain MIT 9215)).